Consider the following 551-residue polypeptide: Nicotianamine aminotransferase B (551 aa).

Residues 24 to 127 (KSNGHGVAAA…GHAAAAAEEE (104 aa)) are disordered. Residues 86–96 (GHRESNGHAEA) show a composition bias toward basic and acidic residues. The span at 111-123 (AANGESNGHAAAA) shows a compositional bias: low complexity. Lys379 is subject to N6-(pyridoxal phosphate)lysine.

This sequence belongs to the class-I pyridoxal-phosphate-dependent aminotransferase family. Requires pyridoxal 5'-phosphate as cofactor. Expressed in roots, but not in leaves.

It catalyses the reaction nicotianamine + 2-oxoglutarate = 3''-deamino-3''-oxonicotianamine + L-glutamate. Its function is as follows. Involved in biosynthesis of mugineic acid family phytosiderophores. This is Nicotianamine aminotransferase B from Hordeum vulgare (Barley).